Here is a 359-residue protein sequence, read N- to C-terminus: Pheromone receptor 1 (359 aa).

7 helical membrane-spanning segments follow: residues 5 to 25 (VTPFFALFACILVLFALGWHI), 33 to 53 (ITLSLYLFFGNLDNFVNSVAW), 71 to 87 (LRHALYIAIPASNLVIA), 110 to 130 (IIIDLLISVGLPVLYVSLMIV), 147 to 167 (FLSLSWVWVLLVAAPVLIVSF), 206 to 226 (LLVLTAIDMLLFFPIYVGSVS), and 268 to 288 (LILSRLVCPISAYIFFAMFGL). The disordered stretch occupies residues 335–359 (TSGGIDGSPHSEKFSINTPTKYEEA). The segment covering 348 to 359 (FSINTPTKYEEA) has biased composition (polar residues).

The protein belongs to the G-protein coupled receptor 4 family.

It localises to the membrane. In terms of biological role, receptor for the A2 pheromone, a prenylated mating factor. The chain is Pheromone receptor 1 (PRA1) from Ustilago hordei (Barley covered smut fungus).